The following is a 253-amino-acid chain: DNA repair protein RecO (253 aa).

The protein belongs to the RecO family.

In terms of biological role, involved in DNA repair and RecF pathway recombination. This chain is DNA repair protein RecO, found in Streptococcus agalactiae serotype Ia (strain ATCC 27591 / A909 / CDC SS700).